Consider the following 96-residue polypeptide: Muconolactone Delta-isomerase 2 (96 aa).

Belongs to the muconolactone Delta-isomerase family. Homodecamer.

It carries out the reaction (S)-muconolactone = (4,5-dihydro-5-oxofuran-2-yl)-acetate. It functions in the pathway aromatic compound metabolism; beta-ketoadipate pathway; 5-oxo-4,5-dihydro-2-furylacetate from catechol: step 3/3. The protein is Muconolactone Delta-isomerase 2 (catC2) of Acinetobacter lwoffii.